An 82-amino-acid polypeptide reads, in one-letter code: Exodeoxyribonuclease 7 small subunit (82 aa).

It belongs to the XseB family. Heterooligomer composed of large and small subunits.

The protein localises to the cytoplasm. It carries out the reaction Exonucleolytic cleavage in either 5'- to 3'- or 3'- to 5'-direction to yield nucleoside 5'-phosphates.. In terms of biological role, bidirectionally degrades single-stranded DNA into large acid-insoluble oligonucleotides, which are then degraded further into small acid-soluble oligonucleotides. This Pectobacterium atrosepticum (strain SCRI 1043 / ATCC BAA-672) (Erwinia carotovora subsp. atroseptica) protein is Exodeoxyribonuclease 7 small subunit.